The following is a 249-amino-acid chain: NAD(P)H-quinone oxidoreductase subunit T, chloroplastic (249 aa).

The transit peptide at 1–45 (MAYATSTYARTSCIILPKIQNGAHFTDDTKAFRRITARRVTRIYA) directs the protein to the chloroplast. A disordered region spans residues 44–84 (YASQGPTKPSKPSPGVDTRIHWESPDEGWIGGRSDPAKSVD). The region spanning 106–172 (SHYQFLGVST…ETRRFYDWTL (67 aa)) is the J domain. Residues 224–244 (LTFDILIVLFAVCCIAFVIVF) form a helical membrane-spanning segment.

Part of the chloroplast NDH complex, composed of a mixture of chloroplast and nucleus encoded subunits. Component of the electron donor-binding subcomplex, at least composed of NDHS, NDHT and NDHU.

It is found in the plastid. The protein resides in the chloroplast thylakoid membrane. The enzyme catalyses a plastoquinone + NADH + (n+1) H(+)(in) = a plastoquinol + NAD(+) + n H(+)(out). It catalyses the reaction a plastoquinone + NADPH + (n+1) H(+)(in) = a plastoquinol + NADP(+) + n H(+)(out). Its function is as follows. NDH shuttles electrons from NAD(P)H:plastoquinone, via FMN and iron-sulfur (Fe-S) centers, to quinones in the photosynthetic chain and possibly in a chloroplast respiratory chain. The immediate electron acceptor for the enzyme in this species is believed to be plastoquinone. Couples the redox reaction to proton translocation, and thus conserves the redox energy in a proton gradient. Required for the accumulation of both the NDH subcomplex A and NDHS. This Arabidopsis thaliana (Mouse-ear cress) protein is NAD(P)H-quinone oxidoreductase subunit T, chloroplastic.